The sequence spans 216 residues: Adenylate kinase (216 aa).

Position 11 to 16 (11 to 16) interacts with ATP; sequence GSGKGT. The segment at 31-60 is NMP; it reads ATGDLFRKAIERGDELGDTVKSYMERGELV. AMP-binding positions include T32, R37, 58 to 60, 86 to 89, and Q93; these read ELV and GFPR. An LID region spans residues 127 to 163; sequence GRWVCRSCQSPYQCGCAEVAEGKCSRCQGELYQRPDD. R128 contacts ATP. 4 residues coordinate Zn(2+): C131, C134, C150, and C153. Positions 160 and 171 each coordinate AMP. Residue A199 participates in ATP binding.

It belongs to the adenylate kinase family. Monomer.

Its subcellular location is the cytoplasm. It carries out the reaction AMP + ATP = 2 ADP. The protein operates within purine metabolism; AMP biosynthesis via salvage pathway; AMP from ADP: step 1/1. In terms of biological role, catalyzes the reversible transfer of the terminal phosphate group between ATP and AMP. Plays an important role in cellular energy homeostasis and in adenine nucleotide metabolism. This Dehalococcoides mccartyi (strain ATCC BAA-2266 / KCTC 15142 / 195) (Dehalococcoides ethenogenes (strain 195)) protein is Adenylate kinase.